We begin with the raw amino-acid sequence, 397 residues long: Phosphoglycerate kinase (397 aa).

Substrate is bound by residues 21–23, Arg-37, 60–63, Arg-119, and Arg-152; these read DFN and HLGR. ATP contacts are provided by residues Lys-203, Gly-294, Glu-325, and 354–357; that span reads GGDS.

This sequence belongs to the phosphoglycerate kinase family. Monomer.

It is found in the cytoplasm. The enzyme catalyses (2R)-3-phosphoglycerate + ATP = (2R)-3-phospho-glyceroyl phosphate + ADP. It participates in carbohydrate degradation; glycolysis; pyruvate from D-glyceraldehyde 3-phosphate: step 2/5. This Pelodictyon phaeoclathratiforme (strain DSM 5477 / BU-1) protein is Phosphoglycerate kinase.